A 92-amino-acid polypeptide reads, in one-letter code: Transcription factor S4 (92 aa).

The interval 1–31 is ZR-N; the sequence is MRFCPKCGSFLKVKGNKMVCSKCGYSDHDVE. Zn(2+)-binding residues include Cys4, Cys7, Cys20, and Cys23. The tract at residues 32–56 is flexible linker; it reads KVILKENVAHENDKTIIADGETIEG. The segment at 55–92 is ZR-C; it reads EGRVAISLCPRCGSVRAILLNKKKRLYRCMTCNFVYNI. Positions 63 and 66 each coordinate Zn(2+). Residues Lys76, Lys77, and Lys78 contribute to the active site. Zn(2+)-binding residues include Cys83 and Cys86.

The protein belongs to the archaeal RpoM/eukaryotic RPA12/RPB9/RPC11 RNA polymerase family. Interacts with RNA polymerase. Requires Zn(2+) as cofactor.

Its function is as follows. A potent inhibitor of RNA polymerase (RNAP) probably involved in viral defense. Destabilizes the transcription pre-initiation complex of TBP, TFB, DNA and RNAP, inhibits abortive transcription initiation, productive initiation and transcription elongation. Increases the RNAP KM for NTPs about 50-fold. Overexpression of TFS1-tip4 (TFS1 with the active tip of this protein, phenocopies this protein) in S.acidocaldarius MW001 leads to severe growth inhibition. When bound to RNAP induces conformational changes that widen the DNA-binding channel, probably destabilizing the interaction of DNA with RNAP. The polypeptide is Transcription factor S4 (Saccharolobus solfataricus (strain ATCC 35092 / DSM 1617 / JCM 11322 / P2) (Sulfolobus solfataricus)).